Here is a 294-residue protein sequence, read N- to C-terminus: MEKILVTISTGAASFAVLAVLFTIPSLYNTINEVHDEVLDGVSVFRVETDSAWTEMMDIQITVTPPTKPRVNPFNSIFRQKRQTFSGLPAWCQCEPTKPTCPPGPPGPPGQPGQPGTPGAPGPKGEDNTSTYAPITCAPVSQDCVKCPQGPAGPEGPAGPAGPAGPDGQPGAPGNAGNPGSDGQPGAPGDDGQPGAPGQDGQPGAPGQDGQRGSGAPGAPGAPGNAGPAGPAGQDGAPGQDGQPGPAGPAGQDGAPGNAGSDGQPGAPGGPGLPGNDAAYCACPPRSAVFVSRH.

An N-terminal signal peptide occupies residues 1–30 (MEKILVTISTGAASFAVLAVLFTIPSLYNT). Positions 100–112 (TCPPGPPGPPGQP) are enriched in pro residues. Disordered regions lie at residues 100-134 (TCPP…TYAP) and 148-278 (PQGP…GNDA). Triple-helical region regions lie at residues 102–127 (PPGP…KGED) and 153–274 (GPEG…PGLP). Low complexity-rich tracts occupy residues 164–209 (AGPD…PGQD) and 219–265 (APGA…DGQP).

Collagen polypeptide chains are complexed within the cuticle by disulfide bonds and other types of covalent cross-links.

Functionally, nematode cuticles are composed largely of collagen-like proteins. The cuticle functions both as an exoskeleton and as a barrier to protect the worm from its environment. The protein is Cuticle collagen 144 of Caenorhabditis briggsae.